Reading from the N-terminus, the 1058-residue chain is Zinc finger protein 865 (1058 aa).

Disordered regions lie at residues 1–24 (MEAN…EDGV), 58–134 (LPCT…PPLF), and 156–201 (GNLK…ACDP). Gly residues predominate over residues 8 to 21 (SGAGGGGSSGIGGE). Over residues 61–78 (TPGPPPQPPPQPPPPQYD) the composition is skewed to pro residues. Residues 93 to 113 (SSSSSSSSSSSSSSSSSSSSS) are compositionally biased toward low complexity. Residues 120 to 133 (PPLPPTFGAPPPPL) show a composition bias toward pro residues. Residues 172–187 (GLGTPTGTPGPLTTPS) are compositionally biased toward low complexity. 2 consecutive C2H2-type zinc fingers follow at residues 220 to 242 (FPCG…MLVH) and 248 to 270 (YECG…RRCH). The tract at residues 269–342 (CHKDVPPTPT…PPGVAMPPSA (74 aa)) is disordered. Over residues 294 to 324 (PVSTASATASSDPAAVSSGPSATPATPATST) the composition is skewed to low complexity. C2H2-type zinc fingers lie at residues 350 to 372 (FACS…QIIH), 378 to 400 (FSCS…VKTH), 407 to 429 (LPCG…QAAH), 439 to 461 (YPCD…KAAH), 546 to 568 (FCCG…ERIH), 574 to 596 (HQCP…HVVH), 602 to 624 (YKCE…RQVH), 664 to 686 (YACS…KEAH), and 692 to 714 (YGCD…KLVH). Residues 459–486 (AAHAPPVATEPAKDGAASVPQPPPPFPP) form a disordered region. Positions 721–743 (LLAPTPSGPQSSDGGSSGGGTDA) are disordered. C2H2-type zinc fingers lie at residues 791–813 (FSCA…KYVH), 819–841 (LGCG…RRSH), 847–869 (FRCP…QRCH), 875–897 (YRCG…RVVH), 903–925 (FKCG…RRLH), 931–953 (QRCG…QRLH), 959–981 (YRCE…QRAH), 988–1010 (LRCP…LAAH), and 1016–1038 (FRCS…RLMH). Residue Lys-801 forms a Glycyl lysine isopeptide (Lys-Gly) (interchain with G-Cter in SUMO2) linkage. Lys-1039 is covalently cross-linked (Glycyl lysine isopeptide (Lys-Gly) (interchain with G-Cter in SUMO2)).

The protein belongs to the krueppel C2H2-type zinc-finger protein family.

It localises to the nucleus. In terms of biological role, may be involved in transcriptional regulation. The sequence is that of Zinc finger protein 865 (Znf865) from Mus musculus (Mouse).